A 911-amino-acid chain; its full sequence is Leucine--tRNA ligase (911 aa).

A 'HIGH' region motif is present at residues 42-52 (PYPSGKLHMGH). Residues 659 to 663 (TMSKS) carry the 'KMSKS' region motif. Lys-662 is an ATP binding site.

Belongs to the class-I aminoacyl-tRNA synthetase family.

It localises to the cytoplasm. It carries out the reaction tRNA(Leu) + L-leucine + ATP = L-leucyl-tRNA(Leu) + AMP + diphosphate. The protein is Leucine--tRNA ligase of Delftia acidovorans (strain DSM 14801 / SPH-1).